The following is a 217-amino-acid chain: GrpE protein homolog 1, mitochondrial (217 aa).

Residues 1-27 (MAAQCVRLARRSLPALALSLRPSPRLL) constitute a mitochondrion transit peptide. Positions 29-56 (TATKQKNSGQNLEEDMGQSEQKADPPAT) are disordered. Residues 30–39 (ATKQKNSGQN) show a composition bias toward polar residues. Lys94 carries the post-translational modification N6-acetyllysine; alternate. Residue Lys94 is modified to N6-succinyllysine; alternate. Residue Lys100 is modified to N6-acetyllysine. Lys120 bears the N6-succinyllysine mark. Lys215 carries the post-translational modification N6-acetyllysine; alternate. At Lys215 the chain carries N6-succinyllysine; alternate.

The protein belongs to the GrpE family. In terms of assembly, probable component of the PAM complex at least composed of a mitochondrial HSP70 protein, GRPEL1 or GRPEL2, TIMM44, TIMM16/PAM16 and TIMM14/DNAJC19. Binds to HSP70, HSC70 and HSJ1B.

The protein localises to the mitochondrion matrix. Essential component of the PAM complex, a complex required for the translocation of transit peptide-containing proteins from the inner membrane into the mitochondrial matrix in an ATP-dependent manner. Seems to control the nucleotide-dependent binding of mitochondrial HSP70 to substrate proteins. This Homo sapiens (Human) protein is GrpE protein homolog 1, mitochondrial (GRPEL1).